Here is a 455-residue protein sequence, read N- to C-terminus: Anaerobic glycerol-3-phosphate dehydrogenase subunit B (455 aa).

It belongs to the anaerobic G-3-P dehydrogenase subunit B family. As to quaternary structure, composed of a catalytic GlpA/B dimer and of membrane bound GlpC. FMN serves as cofactor.

It catalyses the reaction a quinone + sn-glycerol 3-phosphate = dihydroxyacetone phosphate + a quinol. The protein operates within polyol metabolism; glycerol degradation via glycerol kinase pathway; glycerone phosphate from sn-glycerol 3-phosphate (anaerobic route): step 1/1. Its function is as follows. Conversion of glycerol 3-phosphate to dihydroxyacetone. Uses fumarate or nitrate as electron acceptor. This chain is Anaerobic glycerol-3-phosphate dehydrogenase subunit B, found in Aliivibrio fischeri (strain ATCC 700601 / ES114) (Vibrio fischeri).